A 158-amino-acid chain; its full sequence is NAD(P)H-quinone oxidoreductase subunit J, chloroplastic (158 aa).

Belongs to the complex I 30 kDa subunit family. NDH is composed of at least 16 different subunits, 5 of which are encoded in the nucleus.

The protein resides in the plastid. It is found in the chloroplast thylakoid membrane. It carries out the reaction a plastoquinone + NADH + (n+1) H(+)(in) = a plastoquinol + NAD(+) + n H(+)(out). The enzyme catalyses a plastoquinone + NADPH + (n+1) H(+)(in) = a plastoquinol + NADP(+) + n H(+)(out). Functionally, NDH shuttles electrons from NAD(P)H:plastoquinone, via FMN and iron-sulfur (Fe-S) centers, to quinones in the photosynthetic chain and possibly in a chloroplast respiratory chain. The immediate electron acceptor for the enzyme in this species is believed to be plastoquinone. Couples the redox reaction to proton translocation, and thus conserves the redox energy in a proton gradient. This is NAD(P)H-quinone oxidoreductase subunit J, chloroplastic from Nuphar advena (Common spatterdock).